The sequence spans 66 residues: Toxin Tppa1 (66 aa).

The LCN-type CS-alpha/beta domain occupies Lys-1–Gly-63. Intrachain disulfides connect Cys-11–Cys-62, Cys-15–Cys-37, Cys-23–Cys-43, and Cys-27–Cys-45.

The protein belongs to the long (4 C-C) scorpion toxin superfamily. Sodium channel inhibitor family. Beta subfamily. In terms of tissue distribution, expressed by the venom gland.

It is found in the secreted. Its function is as follows. Beta toxins bind voltage-independently at site-4 of sodium channels (Nav) and shift the voltage of activation toward more negative potentials thereby affecting sodium channel activation and promoting spontaneous and repetitive firing. This Tityus pachyurus (Colombian scorpion) protein is Toxin Tppa1.